The sequence spans 471 residues: Sulfate adenylyltransferase subunit 1 (471 aa).

In terms of domain architecture, tr-type G spans 24–240 (KSLLRFLTCG…ESADVERELE (217 aa)). The G1 stretch occupies residues 33–40 (GSVDDGKS). 33–40 (GSVDDGKS) is a GTP binding site. Positions 91–95 (GITID) are G2. The tract at residues 112–115 (DTPG) is G3. Residues 112–116 (DTPGH) and 167–170 (NKMD) contribute to the GTP site. Residues 167–170 (NKMD) form a G4 region. The G5 stretch occupies residues 204–206 (SAL).

Belongs to the TRAFAC class translation factor GTPase superfamily. Classic translation factor GTPase family. CysN/NodQ subfamily. Heterodimer composed of CysD, the smaller subunit, and CysN.

The catalysed reaction is sulfate + ATP + H(+) = adenosine 5'-phosphosulfate + diphosphate. It functions in the pathway sulfur metabolism; hydrogen sulfide biosynthesis; sulfite from sulfate: step 1/3. Functionally, with CysD forms the ATP sulfurylase (ATPS) that catalyzes the adenylation of sulfate producing adenosine 5'-phosphosulfate (APS) and diphosphate, the first enzymatic step in sulfur assimilation pathway. APS synthesis involves the formation of a high-energy phosphoric-sulfuric acid anhydride bond driven by GTP hydrolysis by CysN coupled to ATP hydrolysis by CysD. The sequence is that of Sulfate adenylyltransferase subunit 1 from Aeromonas salmonicida (strain A449).